The primary structure comprises 195 residues: Large ribosomal subunit protein uL18 (195 aa).

Belongs to the universal ribosomal protein uL18 family. In terms of assembly, part of the 50S ribosomal subunit. Contacts the 5S and 23S rRNAs.

In terms of biological role, this is one of the proteins that bind and probably mediate the attachment of the 5S RNA into the large ribosomal subunit, where it forms part of the central protuberance. This chain is Large ribosomal subunit protein uL18, found in Methanococcus vannielii.